An 890-amino-acid polypeptide reads, in one-letter code: MATQIDASSEAAAATAAAQHTPMMQQYLRIKSEHPDTLVFYRMGDFYELFFEDAEKAARLLDLTLTQRGASAGTPIKMAGVPHHAVEQYLAKLVKFGESAAICEQIGDPATSKGPVERKVVRVVTPGTLTDAALLSDKSDVFLLALCVGHNKRGVASNIGLAWLNLASGALRLAELAPDQLGAALERIRPAEILAADGTIESVPAGMGAITRVPAWHFDIASGTQRLCDQLEVASLDGFGAQALTSANGAAGALLIYAAATQGQQLRHVRSLKVENESEYIGLDPSTRRNLELTETLRGTESPTLYSLLDTCCTAMGSRLLRHWLHHPPRASVAAQARHQAIGALLDAPPNAGLDSLRSALRQIADVERITGRLALLSARPRDLSSLRDTFAALPALRERVAEIASNAAALGRLEAALEPPPGCLDLLTRAIAAEPAAMVRDGGVIARGYDAELDELRDISENCGQFLIDLETRERARTGISNLRVEYNKVHGFYIEVTRGQTDKVPDDYRRRQTLKNAERYITPELKTFEDKALSAQERALARERALYDGVLQALLPHIEGCQRVASGLAELDLLAAFAERARTLDWVAPEFTDEIGIEIDQGRHPVVEAQVEQFIANDCALNPERKLLLITGPNMGGKSTFMRQTALIALMAYVGSYVPAKAARFGPIDRIFTRIGAADDLAGGRSTFMVEMTEAAAILNDATPHSLVLMDEIGRGTSTFDGLALAWAIARHLLSHNRCYTLFATHYFELTQLPVEFPQAANVHLSAVEHGHGIVFLHAVEEGPANQSYGLQVAQLAGVPAPVIRAARKHLAHLEQQSAAQATPQLDLFAAPPVVDEPECNEPPAATPHPALERLLELDPDDLKPRDALDLLYELHTLARSGPADAQR.

634-641 (GPNMGGKS) serves as a coordination point for ATP.

Belongs to the DNA mismatch repair MutS family.

Functionally, this protein is involved in the repair of mismatches in DNA. It is possible that it carries out the mismatch recognition step. This protein has a weak ATPase activity. This is DNA mismatch repair protein MutS from Burkholderia pseudomallei (strain 1710b).